The sequence spans 790 residues: Centrosomal protein of 78 kDa (790 aa).

Disordered regions lie at residues 325–345 (YQWVTSPSSKEPSKTAKQRKK), 362–385 (GLATKKPSSNGRKQGLGKDCYAPN), 428–462 (VTVTVESPSSSETDETEDSSESVQEAPQKTSIKEE), 654–732 (AKTG…LNEP), and 756–790 (KTIKSKPNLLEHSESDTLGSDFELQERVHSSAHLT). A phosphoserine mark is found at S330 and S332. Positions 428 to 438 (VTVTVESPSSS) are enriched in low complexity. The stretch at 455 to 510 (QKTSIKEETLQEKLEECLRQLKEERVIRLKADKRVSELEHENAQLRNINFSLSEAL) forms a coiled coil. Basic and acidic residues-rich tracts occupy residues 693–708 (PSRRPSAERHPRKDLL) and 721–732 (GPGDRRSLLNEP).

This sequence belongs to the CEP78 family. In terms of assembly, interacts with PLK4. Interacts with FAM161A. Interacts with IFT20; regulating IFT20 stability and localization. Interacts with TTC21A; regulating TTC21A stability and localization. Interacts with USP16; promoting USP16-dependent deubiquitination of tektins. Interacts with DCAF1/VPRBP; promoting localization of the EDVP complex to centrosomes. Interacts with CEP350; promoting CEP78 localization to centrosome and centriole. As to expression, expressed by photoreceptor cells in the retina.

It is found in the cytoplasm. The protein resides in the cytoskeleton. The protein localises to the microtubule organizing center. It localises to the centrosome. Its subcellular location is the centriole. It is found in the cilium basal body. In terms of biological role, centriole wall protein that localizes to mature centrioles and regulates centriole and cilia biogenesis. Involved in centrosome duplication: required for efficient PLK4 centrosomal localization and PLK4-induced overduplication of centrioles. Involved in cilium biogenesis and controls cilium length. Acts as a regulator of protein stability by preventing ubiquitination of centrosomal proteins, such as CCP110 and tektins. Associates with the EDVP complex, preventing ubiquitination and degradation of CCP110. Promotes deubiquitination of tektin proteins (TEKT1, TEKT2, TEK3, TEKT4 and TEKT5) via its interaction with USP16. This Mus musculus (Mouse) protein is Centrosomal protein of 78 kDa.